The chain runs to 247 residues: Uridylate kinase (247 aa).

Position 18–21 (18–21) interacts with ATP; sequence KLSG. Gly-60 contacts UMP. The ATP site is built by Gly-61 and Arg-65. UMP-binding positions include Asp-80 and 141-148; that span reads TGNPFFTT. The ATP site is built by Thr-168, Tyr-174, and Asp-177.

Belongs to the UMP kinase family. As to quaternary structure, homohexamer.

Its subcellular location is the cytoplasm. It catalyses the reaction UMP + ATP = UDP + ADP. Its pathway is pyrimidine metabolism; CTP biosynthesis via de novo pathway; UDP from UMP (UMPK route): step 1/1. Its activity is regulated as follows. Inhibited by UTP. Its function is as follows. Catalyzes the reversible phosphorylation of UMP to UDP. The protein is Uridylate kinase of Pseudomonas savastanoi pv. phaseolicola (strain 1448A / Race 6) (Pseudomonas syringae pv. phaseolicola (strain 1448A / Race 6)).